Reading from the N-terminus, the 962-residue chain is Integrator complex subunit 7 (962 aa).

Residues Ser338 and Ser809 each carry the phosphoserine modification.

Belongs to the Integrator subunit 7 family. As to quaternary structure, component of the Integrator complex, composed of core subunits INTS1, INTS2, INTS3, INTS4, INTS5, INTS6, INTS7, INTS8, INTS9/RC74, INTS10, INTS11/CPSF3L, INTS12, INTS13, INTS14 and INTS15. The core complex associates with protein phosphatase 2A subunits PPP2CA and PPP2R1A, to form the Integrator-PP2A (INTAC) complex. Interacts with NABP2.

It is found in the nucleus. The protein localises to the chromosome. It localises to the cytoplasm. In terms of biological role, component of the integrator complex, a multiprotein complex that terminates RNA polymerase II (Pol II) transcription in the promoter-proximal region of genes. The integrator complex provides a quality checkpoint during transcription elongation by driving premature transcription termination of transcripts that are unfavorably configured for transcriptional elongation: the complex terminates transcription by (1) catalyzing dephosphorylation of the C-terminal domain (CTD) of Pol II subunit POLR2A/RPB1 and SUPT5H/SPT5, (2) degrading the exiting nascent RNA transcript via endonuclease activity and (3) promoting the release of Pol II from bound DNA. The integrator complex is also involved in terminating the synthesis of non-coding Pol II transcripts, such as enhancer RNAs (eRNAs), small nuclear RNAs (snRNAs), telomerase RNAs and long non-coding RNAs (lncRNAs). May be not involved in the recruitment of cytoplasmic dynein to the nuclear envelope by different components of the INT complex. Plays a role in DNA damage response (DDR) signaling during the S phase. The sequence is that of Integrator complex subunit 7 (INTS7) from Bos taurus (Bovine).